The primary structure comprises 199 residues: Ubiquitin-conjugating enzyme E2-22 kDa (199 aa).

One can recognise a UBC core domain in the interval 4–154; it reads MAVSRIKREF…AKHWTNAYAG (151 aa). Cys-92 functions as the Glycyl thioester intermediate in the catalytic mechanism. The UBA domain maps to 161–199; that stretch reads DCDSKIQRLRDMGIDEHEARAVLSKENWNLEKATEGLFS.

Belongs to the ubiquitin-conjugating enzyme family. As to quaternary structure, interacts with Rpn10. As to expression, during gastrulation, expression is highest in the invaginating posterior midgut primordium (PMG), high expression is also observed in the cephalic furrow and ventral ectodermal neurogenic region. In stage 10-11 embryos, expression is high in the pole cells present in the pocket formed by the PMG. During germ band retraction, expression appears to reinitiate in many tissues, especially the gut and nervous system. After dorsal closure, expression is detectable at low levels throughout the embryo.

The enzyme catalyses S-ubiquitinyl-[E1 ubiquitin-activating enzyme]-L-cysteine + [E2 ubiquitin-conjugating enzyme]-L-cysteine = [E1 ubiquitin-activating enzyme]-L-cysteine + S-ubiquitinyl-[E2 ubiquitin-conjugating enzyme]-L-cysteine.. Its pathway is protein modification; protein ubiquitination. Its function is as follows. Catalyzes the covalent attachment of ubiquitin to other proteins. This Drosophila melanogaster (Fruit fly) protein is Ubiquitin-conjugating enzyme E2-22 kDa.